The primary structure comprises 405 residues: Arginine biosynthesis bifunctional protein ArgJ (405 aa).

Polar residues predominate over residues 1 to 18 (MTSADKNNPDTSTAQGSS). The interval 1–21 (MTSADKNNPDTSTAQGSSADL) is disordered. 6 residues coordinate substrate: Thr167, Lys189, Thr200, Glu281, Asn400, and Thr405. The active-site Nucleophile is Thr200.

This sequence belongs to the ArgJ family. Heterotetramer of two alpha and two beta chains.

It localises to the cytoplasm. It catalyses the reaction N(2)-acetyl-L-ornithine + L-glutamate = N-acetyl-L-glutamate + L-ornithine. It carries out the reaction L-glutamate + acetyl-CoA = N-acetyl-L-glutamate + CoA + H(+). Its pathway is amino-acid biosynthesis; L-arginine biosynthesis; L-ornithine and N-acetyl-L-glutamate from L-glutamate and N(2)-acetyl-L-ornithine (cyclic): step 1/1. It functions in the pathway amino-acid biosynthesis; L-arginine biosynthesis; N(2)-acetyl-L-ornithine from L-glutamate: step 1/4. In terms of biological role, catalyzes two activities which are involved in the cyclic version of arginine biosynthesis: the synthesis of N-acetylglutamate from glutamate and acetyl-CoA as the acetyl donor, and of ornithine by transacetylation between N(2)-acetylornithine and glutamate. In Corynebacterium jeikeium (strain K411), this protein is Arginine biosynthesis bifunctional protein ArgJ.